Reading from the N-terminus, the 107-residue chain is MSAAAQVTDSTFKQEVLDSDVPVLVDFWAPWCGPCRMVAPVVDEIAQQYEGKIKVVKVNTDENPQVASQYGIRSIPTLMIFKGGQKVDMVVGAVPKTTLSQTLEKHL.

The region spanning 2-107 is the Thioredoxin domain; sequence SAAAQVTDST…TLSQTLEKHL (106 aa). Cysteines 32 and 35 form a disulfide.

The protein belongs to the thioredoxin family.

Functionally, participates in various redox reactions through the reversible oxidation of its active center dithiol to a disulfide and catalyzes dithiol-disulfide exchange reactions. The sequence is that of Thioredoxin 1 (trxA) from Nostoc sp. (strain PCC 7120 / SAG 25.82 / UTEX 2576).